Reading from the N-terminus, the 504-residue chain is Chromosomal replication initiator protein DnaA (504 aa).

The segment at 1–109 is domain I, interacts with DnaA modulators; sequence MTADPDPPFV…PTDEPEDAPD (109 aa). The segment at 98–162 is disordered; that stretch reads ATPTDEPEDA…PDTSSDDSNA (65 aa). A compositionally biased stretch (low complexity) spans 109–125; the sequence is DSFADSPAPASVPAGPA. The tract at residues 110 to 163 is domain II; sequence SFADSPAPASVPAGPADADEIDDDRDARVNAQESWPKYFSRPEPDTSSDDSNAV. A domain III, AAA+ region region spans residues 164-380; sequence NLNRRYTFDT…GALIRVTAFA (217 aa). Gly-208, Gly-210, Lys-211, and Thr-212 together coordinate ATP. Positions 381-504 are domain IV, binds dsDNA; sequence SLNKTRIDRS…TTRIRQRAKR (124 aa).

Belongs to the DnaA family. Oligomerizes as a right-handed, spiral filament on DNA at oriC.

Its subcellular location is the cytoplasm. Functionally, plays an essential role in the initiation and regulation of chromosomal replication. ATP-DnaA binds to the origin of replication (oriC) to initiate formation of the DNA replication initiation complex once per cell cycle. Binds the DnaA box (a 9 base pair repeat at the origin) and separates the double-stranded (ds)DNA. Forms a right-handed helical filament on oriC DNA; dsDNA binds to the exterior of the filament while single-stranded (ss)DNA is stabiized in the filament's interior. The ATP-DnaA-oriC complex binds and stabilizes one strand of the AT-rich DNA unwinding element (DUE), permitting loading of DNA polymerase. After initiation quickly degrades to an ADP-DnaA complex that is not apt for DNA replication. Binds acidic phospholipids. Its function is as follows. The probable consensus sequence for the DnaA box of this bacterium is 5'-TT(G/C)TCCACA-3'. The protein is Chromosomal replication initiator protein DnaA of Mycolicibacterium smegmatis (strain ATCC 700084 / mc(2)155) (Mycobacterium smegmatis).